Here is a 299-residue protein sequence, read N- to C-terminus: Small ribosomal subunit biogenesis GTPase RsgA (299 aa).

Residues 64-225 enclose the CP-type G domain; sequence KNEMIRPPVA…VGDTPGFSSL (162 aa). GTP is bound by residues 113–116 and 168–176; these read TKTD and GQTGAGKST. Zn(2+)-binding residues include Cys-249, Cys-254, His-256, and Cys-262.

Belongs to the TRAFAC class YlqF/YawG GTPase family. RsgA subfamily. Monomer. Associates with 30S ribosomal subunit, binds 16S rRNA. Requires Zn(2+) as cofactor.

It is found in the cytoplasm. In terms of biological role, one of several proteins that assist in the late maturation steps of the functional core of the 30S ribosomal subunit. Helps release RbfA from mature subunits. May play a role in the assembly of ribosomal proteins into the subunit. Circularly permuted GTPase that catalyzes slow GTP hydrolysis, GTPase activity is stimulated by the 30S ribosomal subunit. The protein is Small ribosomal subunit biogenesis GTPase RsgA of Latilactobacillus sakei subsp. sakei (strain 23K) (Lactobacillus sakei subsp. sakei).